Reading from the N-terminus, the 269-residue chain is MLGPGQVRLRPRVWRDKAGGRVADGASGLPPARGSWRETGTGRALGASSPPRPAQGSSSPGIQSGPSSRPGSPRGAEQAGTPRPRLSLGISQATGSAARWRTRRTGKGLGYNSDEIRPRTLLIEHLMEGGRRDHHTMTVLWGTQEIIVAEFHKKIKEAFEVFDHESNNTVDVREIGTIIRSLGCCPTEGELHDLIAEVEEEEPTGYIRFEKFLPVMTEILLERKYRPIPEDVLLRAFEVLDSAKRGFLTKDELIKYMTEEDGVSLRRPG.

The segment at 1-113 (MLGPGQVRLR…RTGKGLGYNS (113 aa)) is disordered. Residues 54–76 (AQGSSSPGIQSGPSSRPGSPRGA) show a composition bias toward low complexity. EF-hand domains lie at 150–185 (EFHK…LGCC) and 228–263 (IPED…EDGV).

It belongs to the DRC8 family. Component of the nexin-dynein regulatory complex (N-DRC).

The protein resides in the cytoplasm. Its subcellular location is the cytoskeleton. It is found in the flagellum axoneme. Functionally, component of the nexin-dynein regulatory complex (N-DRC), a key regulator of ciliary/flagellar motility which maintains the alignment and integrity of the distal axoneme and regulates microtubule sliding in motile axonemes. The sequence is that of Dynein regulatory complex protein 8 (EFCAB2) from Homo sapiens (Human).